A 124-amino-acid polypeptide reads, in one-letter code: Small ribosomal subunit protein bS6 (124 aa).

Residues 96–124 form a disordered region; it reads ETAPSPMMKEVQREEARKAAQTTTEGQPA. Positions 115 to 124 are enriched in polar residues; the sequence is AQTTTEGQPA.

This sequence belongs to the bacterial ribosomal protein bS6 family.

In terms of biological role, binds together with bS18 to 16S ribosomal RNA. The polypeptide is Small ribosomal subunit protein bS6 (Cupriavidus metallidurans (strain ATCC 43123 / DSM 2839 / NBRC 102507 / CH34) (Ralstonia metallidurans)).